We begin with the raw amino-acid sequence, 817 residues long: General transcription factor 3C polypeptide 4 (817 aa).

Met1 is modified (N-acetylmethionine). The interval 1–40 (MSEADQALVGPKADEPSPPAEEKDEGGGKEAAADAAPGPS) is disordered. A Glycyl lysine isopeptide (Lys-Gly) (interchain with G-Cter in SUMO2) cross-link involves residue Lys221. Ser600 and Ser607 each carry phosphoserine. Positions 603-658 (LLVDSPGMGDGEDEQQEEGTSKQGTKAGLQEKSKEGDTEETPEDSLTAGGDTGGRE) are disordered. Residue Lys624 forms a Glycyl lysine isopeptide (Lys-Gly) (interchain with G-Cter in SUMO2) linkage. The residue at position 647 (Ser647) is a Phosphoserine.

The protein belongs to the TFIIIC subunit 4 family. Part of the TFIIIC subcomplex TFIIIC2, consisting of six subunits, GTF3C1, GTF3C2, GTF3C3, GTF3C4, GTF3C5 and GTF3C6. Interacts with BRF1, GTF3C1, GTF3C2, GTF3C5, GTF3C6, POLR3C and POLR3F.

The protein localises to the nucleus. It carries out the reaction L-lysyl-[protein] + acetyl-CoA = N(6)-acetyl-L-lysyl-[protein] + CoA + H(+). Functionally, essential for RNA polymerase III to make a number of small nuclear and cytoplasmic RNAs, including 5S RNA, tRNA, and adenovirus-associated (VA) RNA of both cellular and viral origin. Has histone acetyltransferase activity (HAT) with unique specificity for free and nucleosomal H3. May cooperate with GTF3C5 in facilitating the recruitment of TFIIIB and RNA polymerase through direct interactions with BRF1, POLR3C and POLR3F. May be localized close to the A box. The polypeptide is General transcription factor 3C polypeptide 4 (Gtf3c4) (Mus musculus (Mouse)).